A 637-amino-acid polypeptide reads, in one-letter code: Probable ATP-binding protein YheS (637 aa).

ABC transporter domains follow at residues 2–246 (IVFS…AQQQ) and 313–527 (LKME…KQEN). ATP contacts are provided by residues 34-41 (GKNGCGKS) and 345-352 (GRNGAGKS). The tract at residues 523-559 (QKQENQTDEAPKENANSAQARKDQKRREAELRAQTQP) is disordered. Positions 542 to 553 (ARKDQKRREAEL) are enriched in basic and acidic residues.

It belongs to the ABC transporter superfamily. ABCF family. YheS subfamily.

In terms of biological role, genetic data indicate it may be involved in ribosome assembly or function. Ectopic expression exacerbates the cold-sensitive growth phenotype of a bipA deletion. The chain is Probable ATP-binding protein YheS (yheS) from Escherichia coli O6:H1 (strain CFT073 / ATCC 700928 / UPEC).